The chain runs to 338 residues: Mitochondrial amidoxime reducing component 2 (338 aa).

The transit peptide at 1–35 directs the protein to the mitochondrion; that stretch reads MGSSSSTALARLGLPGQPRSTWLGVAALGLAAVAL. Glycyl lysine isopeptide (Lys-Gly) (interchain with G-Cter in ubiquitin) cross-links involve residues lysine 59, lysine 138, and lysine 144. Lysine 156 bears the N6-acetyllysine; alternate mark. Lysine 156 participates in a covalent cross-link: Glycyl lysine isopeptide (Lys-Gly) (interchain with G-Cter in ubiquitin); alternate. Residues lysine 173, lysine 187, lysine 289, and lysine 296 each participate in a glycyl lysine isopeptide (Lys-Gly) (interchain with G-Cter in ubiquitin) cross-link. The 149-residue stretch at 188–336 folds into the MOSC domain; the sequence is GRTTKKLYPS…LRVGDPVYRM (149 aa).

In terms of assembly, component of a complex composed of cytochrome b5, NADH-cytochrome b5 reductase (CYB5R3) and MTARC2. It depends on Mo-molybdopterin as a cofactor. In terms of processing, ubiquitinated by PRKN during mitophagy, leading to its degradation and enhancement of mitophagy. Deubiquitinated by USP30.

It localises to the mitochondrion outer membrane. It is found in the peroxisome. The enzyme catalyses N(omega)-hydroxy-L-arginine + 2 Fe(II)-[cytochrome b5] + 2 H(+) = L-arginine + 2 Fe(III)-[cytochrome b5] + H2O. Catalyzes the reduction of N-oxygenated molecules, acting as a counterpart of cytochrome P450 and flavin-containing monooxygenases in metabolic cycles. As a component of prodrug-converting system, reduces a multitude of N-hydroxylated prodrugs particularly amidoximes, leading to increased drug bioavailability. May be involved in mitochondrial N(omega)-hydroxy-L-arginine (NOHA) reduction, regulating endogenous nitric oxide levels and biosynthesis. Postulated to cleave the N-OH bond of N-hydroxylated substrates in concert with electron transfer from NADH to cytochrome b5 reductase then to cytochrome b5, the ultimate electron donor that primes the active site for substrate reduction. The protein is Mitochondrial amidoxime reducing component 2 (Mtarc2) of Rattus norvegicus (Rat).